The following is a 243-amino-acid chain: 1-(5-phosphoribosyl)-5-[(5-phosphoribosylamino)methylideneamino] imidazole-4-carboxamide isomerase (243 aa).

The active-site Proton acceptor is aspartate 8. Aspartate 129 acts as the Proton donor in catalysis.

The protein belongs to the HisA/HisF family.

The protein resides in the cytoplasm. It catalyses the reaction 1-(5-phospho-beta-D-ribosyl)-5-[(5-phospho-beta-D-ribosylamino)methylideneamino]imidazole-4-carboxamide = 5-[(5-phospho-1-deoxy-D-ribulos-1-ylimino)methylamino]-1-(5-phospho-beta-D-ribosyl)imidazole-4-carboxamide. Its pathway is amino-acid biosynthesis; L-histidine biosynthesis; L-histidine from 5-phospho-alpha-D-ribose 1-diphosphate: step 4/9. The chain is 1-(5-phosphoribosyl)-5-[(5-phosphoribosylamino)methylideneamino] imidazole-4-carboxamide isomerase from Nitratidesulfovibrio vulgaris (strain DSM 19637 / Miyazaki F) (Desulfovibrio vulgaris).